The sequence spans 738 residues: 1,4-alpha-glucan branching enzyme GlgB (738 aa).

Catalysis depends on Asp-417, which acts as the Nucleophile. Glu-472 serves as the catalytic Proton donor.

It belongs to the glycosyl hydrolase 13 family. GlgB subfamily. In terms of assembly, monomer.

The enzyme catalyses Transfers a segment of a (1-&gt;4)-alpha-D-glucan chain to a primary hydroxy group in a similar glucan chain.. The protein operates within glycan biosynthesis; glycogen biosynthesis. In terms of biological role, catalyzes the formation of the alpha-1,6-glucosidic linkages in glycogen by scission of a 1,4-alpha-linked oligosaccharide from growing alpha-1,4-glucan chains and the subsequent attachment of the oligosaccharide to the alpha-1,6 position. This Burkholderia pseudomallei (strain 668) protein is 1,4-alpha-glucan branching enzyme GlgB.